The sequence spans 344 residues: Proline-rich transmembrane protein 2 (344 aa).

Disordered regions lie at residues Met1–Pro220 and Gly233–Gly265. Residues Met1–Tyr272 are Cytoplasmic-facing. Ser28 bears the Phosphoserine mark. Positions Pro69–Val82 are enriched in low complexity. A phosphothreonine mark is found at Thr74 and Thr78. Over residues Ala124–Asn143 the composition is skewed to polar residues. The segment covering Thr151–Ala162 has biased composition (pro residues). A compositionally biased stretch (polar residues) spans Glu168–Ser178. Pro residues predominate over residues Ala201–Lys211. The residue at position 242 (Ser242) is a Phosphoserine. Arg244 carries the omega-N-methylarginine modification. A phosphoserine mark is found at Ser252 and Ser253. An intramembrane region (helical) is located at residues Ile273 to Ala293. The Cytoplasmic segment spans residues Tyr294–Ser321. The chain crosses the membrane as a helical span at residues Ile322 to Val342. The Extracellular portion of the chain corresponds to Tyr343–Lys344.

The protein belongs to the CD225/Dispanin family. As to quaternary structure, component of the outer core of AMPAR complex. AMPAR complex consists of an inner core made of 4 pore-forming GluA/GRIA proteins (GRIA1, GRIA2, GRIA3 and GRIA4) and 4 major auxiliary subunits arranged in a twofold symmetry. One of the two pairs of distinct binding sites is occupied either by CNIH2, CNIH3 or CACNG2, CACNG3. The other harbors CACNG2, CACNG3, CACNG4, CACNG8 or GSG1L. This inner core of AMPAR complex is complemented by outer core constituents binding directly to the GluA/GRIA proteins at sites distinct from the interaction sites of the inner core constituents. Outer core constituents include at least PRRT1, PRRT2, CKAMP44/SHISA9, FRRS1L and NRN1. The proteins of the inner and outer core serve as a platform for other, more peripherally associated AMPAR constituents. Alone or in combination, these auxiliary subunits control the gating and pharmacology of the AMPAR complex and profoundly impact their biogenesis and protein processing. Interacts with intersectin 1/ITSN1. Interacts with SNARE complex components, including SNAP25, STX1A, SYT1 and SYT2; this interaction may inhibit SNARE complex formation. In terms of tissue distribution, neuron-specific expression throughout the brain, including hippocampus (at protein level).

The protein resides in the cell membrane. It localises to the presynaptic cell membrane. Its subcellular location is the synapse. It is found in the cell projection. The protein localises to the axon. The protein resides in the cytoplasmic vesicle. It localises to the secretory vesicle. Its subcellular location is the synaptic vesicle membrane. It is found in the postsynaptic density membrane. The protein localises to the dendritic spine. In terms of biological role, as a component of the outer core of AMPAR complex, may be involved in synaptic transmission in the central nervous system. In hippocampal neurons, in presynaptic terminals, plays an important role in the final steps of neurotransmitter release, possibly by regulating Ca(2+)-sensing. In the cerebellum, may inhibit SNARE complex formation and down-regulate short-term facilitation. The sequence is that of Proline-rich transmembrane protein 2 (Prrt2) from Rattus norvegicus (Rat).